Consider the following 469-residue polypeptide: Putative multidrug resistance protein MdtD (469 aa).

13 consecutive transmembrane segments (helical) span residues 8–28 (LWIV…VNTA), 45–65 (SVIV…GWLA), 68–88 (VGVK…SLLC), 102–122 (VIQG…VMKI), 134–154 (FVTL…GFLV), 161–181 (WIFL…LWLM), 191–211 (FDIS…LALD), 215–235 (GLGL…LALA), 263–283 (LIGS…TPVF), 286–306 (IGLG…IIGS), 338–358 (LSFP…VLFF), 392–412 (MVMQ…LGVF), and 426–446 (SAFL…ALIF).

Belongs to the major facilitator superfamily. TCR/Tet family.

Its subcellular location is the cell inner membrane. In Yersinia enterocolitica serotype O:8 / biotype 1B (strain NCTC 13174 / 8081), this protein is Putative multidrug resistance protein MdtD.